The following is a 272-amino-acid chain: Single-strand selective monofunctional uracil DNA glycosylase (272 aa).

Residues 1 to 27 are disordered; sequence MAVPQPFPSGPHLQPAGALMEPQPSPR. Substrate is bound by residues Met86, Phe100, and Asn165. Residues 175–189 form a DNA-binding region; that stretch reads SGRNITPAELPAKQR. His241 is a binding site for substrate.

It belongs to the uracil-DNA glycosylase (UDG) superfamily. SMUG1 family.

It is found in the nucleus. In terms of biological role, recognizes base lesions in the genome and initiates base excision DNA repair. Acts as a monofunctional DNA glycosylase specific for uracil (U) residues in DNA with a preference for single-stranded DNA substrates. The activity is greater toward mismatches (U/G) compared to matches (U/A). Excises uracil (U), 5-formyluracil (fU) and uracil derivatives bearing an oxidized group at C5 [5-hydroxyuracil (hoU) and 5-hydroxymethyluracil (hmU)] in ssDNA and dsDNA, but not analogous cytosine derivatives (5-hydroxycytosine and 5-formylcytosine), nor other oxidized bases. The activity is damage-specific and salt-dependent. The substrate preference is the following: ssDNA &gt; dsDNA (G pair) = dsDNA (A pair) at low salt concentration, and dsDNA (G pair) &gt; dsDNA (A pair) &gt; ssDNA at high salt concentration. The polypeptide is Single-strand selective monofunctional uracil DNA glycosylase (SMUG1) (Bos taurus (Bovine)).